Consider the following 20-residue polypeptide: Ribulose bisphosphate carboxylase small subunit (20 aa).

The protein belongs to the RuBisCO small chain family. Heterohexadecamer of 8 large and 8 small subunits.

It is found in the plastid. The protein localises to the chloroplast. Functionally, ruBisCO catalyzes two reactions: the carboxylation of D-ribulose 1,5-bisphosphate, the primary event in carbon dioxide fixation, as well as the oxidative fragmentation of the pentose substrate in the photorespiration process. Both reactions occur simultaneously and in competition at the same active site. Although the small subunit is not catalytic it is essential for maximal activity. This chain is Ribulose bisphosphate carboxylase small subunit, found in Chattonella marina var. antiqua (Red tide flagellate).